We begin with the raw amino-acid sequence, 204 residues long: Kunitz type trypsin inhibitor 106 (204 aa).

The N-terminal stretch at 1–26 (MSMRLSIRTLIILAHVCLFITTTTIA) is a signal peptide. Asn62 carries an N-linked (GlcNAc...) asparagine glycan. The cysteines at positions 65 and 112 are disulfide-linked. N-linked (GlcNAc...) asparagine glycosylation occurs at Asn141. 2 disulfides stabilise this stretch: Cys164–Cys176 and Cys169–Cys172.

This sequence belongs to the protease inhibitor I3 (leguminous Kunitz-type inhibitor) family. Interacts with SCP1 and CP. Expressed at low levels in non-mycorrhizal roots.

The protein resides in the secreted. Its subcellular location is the extracellular space. It is found in the apoplast. Its function is as follows. Protease inhibitor that, together with SCP1, controls mycorrhiza establishment and arbuscule development during root colonization by arbuscular mycorrhizal (AM) fungi (e.g. Rhizophagus irregularis), probably by degrading SCP1 in the apoplast of the periarbuscular region. This is Kunitz type trypsin inhibitor 106 from Medicago truncatula (Barrel medic).